Here is a 137-residue protein sequence, read N- to C-terminus: NADPH-dependent 7-cyano-7-deazaguanine reductase (137 aa).

Residue Cys50 is the Thioimide intermediate of the active site. Asp57 functions as the Proton donor in the catalytic mechanism. Substrate is bound by residues 72–74 and 91–92; these read VEL and HE.

The protein belongs to the GTP cyclohydrolase I family. QueF type 1 subfamily.

It is found in the cytoplasm. The enzyme catalyses 7-aminomethyl-7-carbaguanine + 2 NADP(+) = 7-cyano-7-deazaguanine + 2 NADPH + 3 H(+). The protein operates within tRNA modification; tRNA-queuosine biosynthesis. Catalyzes the NADPH-dependent reduction of 7-cyano-7-deazaguanine (preQ0) to 7-aminomethyl-7-deazaguanine (preQ1). The sequence is that of NADPH-dependent 7-cyano-7-deazaguanine reductase from Synechocystis sp. (strain ATCC 27184 / PCC 6803 / Kazusa).